A 301-amino-acid chain; its full sequence is uncharacterized protein (301 aa).

In terms of domain architecture, HTH lysR-type spans 1-58 (MDIRHLTYFLEVARLKSFTKASQSLYVSQPTISKMIKNLEEELGIELFYRNGRQVELT). The H-T-H motif DNA-binding region spans 18–37 (FTKASQSLYVSQPTISKMIK).

The protein belongs to the LysR transcriptional regulatory family.

This is an uncharacterized protein from Bacillus subtilis (strain 168).